The primary structure comprises 158 residues: MSQSVPMTEEGYRSLQDELKHLIRVERPKVVQDIAEARSHGDLSENAEYDAAKNRQGFIEGRIKELNDKIARAEVIKPGDVVTDKIVFGASVTLFDVDTDSEVTYKIVGEDEADLKHGKISVTSPVGRALIGHRLDDEVRIKVPSGLKIYEVVNIAYM.

The stretch at 48–74 (EYDAAKNRQGFIEGRIKELNDKIARAE) forms a coiled coil.

This sequence belongs to the GreA/GreB family.

In terms of biological role, necessary for efficient RNA polymerase transcription elongation past template-encoded arresting sites. The arresting sites in DNA have the property of trapping a certain fraction of elongating RNA polymerases that pass through, resulting in locked ternary complexes. Cleavage of the nascent transcript by cleavage factors such as GreA or GreB allows the resumption of elongation from the new 3'terminus. GreA releases sequences of 2 to 3 nucleotides. The polypeptide is Transcription elongation factor GreA (Syntrophotalea carbinolica (strain DSM 2380 / NBRC 103641 / GraBd1) (Pelobacter carbinolicus)).